The chain runs to 398 residues: Bifunctional enzyme IspD/IspF (398 aa).

The segment at 1-234 (MPSSKRTAAI…ARLAAALGDI (234 aa)) is 2-C-methyl-D-erythritol 4-phosphate cytidylyltransferase. Residues 235–398 (RTGTGYDVHA…LPWNDKGRDT (164 aa)) form a 2-C-methyl-D-erythritol 2,4-cyclodiphosphate synthase region. 2 residues coordinate a divalent metal cation: Asp241 and His243. 4-CDP-2-C-methyl-D-erythritol 2-phosphate is bound by residues 241–243 (DVH) and 267–268 (HS). Residue His275 participates in a divalent metal cation binding. 4-CDP-2-C-methyl-D-erythritol 2-phosphate is bound by residues 289-291 (DIG), 365-368 (TTSE), Phe372, and Arg375.

The protein in the N-terminal section; belongs to the IspD/TarI cytidylyltransferase family. IspD subfamily. It in the C-terminal section; belongs to the IspF family. A divalent metal cation is required as a cofactor.

It carries out the reaction 2-C-methyl-D-erythritol 4-phosphate + CTP + H(+) = 4-CDP-2-C-methyl-D-erythritol + diphosphate. The catalysed reaction is 4-CDP-2-C-methyl-D-erythritol 2-phosphate = 2-C-methyl-D-erythritol 2,4-cyclic diphosphate + CMP. It participates in isoprenoid biosynthesis; isopentenyl diphosphate biosynthesis via DXP pathway; isopentenyl diphosphate from 1-deoxy-D-xylulose 5-phosphate: step 2/6. Its pathway is isoprenoid biosynthesis; isopentenyl diphosphate biosynthesis via DXP pathway; isopentenyl diphosphate from 1-deoxy-D-xylulose 5-phosphate: step 4/6. Bifunctional enzyme that catalyzes the formation of 4-diphosphocytidyl-2-C-methyl-D-erythritol from CTP and 2-C-methyl-D-erythritol 4-phosphate (MEP) (IspD), and catalyzes the conversion of 4-diphosphocytidyl-2-C-methyl-D-erythritol 2-phosphate (CDP-ME2P) to 2-C-methyl-D-erythritol 2,4-cyclodiphosphate (ME-CPP) with a corresponding release of cytidine 5-monophosphate (CMP) (IspF). The polypeptide is Bifunctional enzyme IspD/IspF (Nitrobacter winogradskyi (strain ATCC 25391 / DSM 10237 / CIP 104748 / NCIMB 11846 / Nb-255)).